Reading from the N-terminus, the 318-residue chain is Coproporphyrin III ferrochelatase (318 aa).

Positions 186 and 268 each coordinate Fe(2+).

Belongs to the ferrochelatase family.

It localises to the cytoplasm. The enzyme catalyses Fe-coproporphyrin III + 2 H(+) = coproporphyrin III + Fe(2+). Its pathway is porphyrin-containing compound metabolism; protoheme biosynthesis. Its function is as follows. Involved in coproporphyrin-dependent heme b biosynthesis. Catalyzes the insertion of ferrous iron into coproporphyrin III to form Fe-coproporphyrin III. The polypeptide is Coproporphyrin III ferrochelatase (Lactococcus lactis subsp. cremoris (strain SK11)).